Consider the following 949-residue polypeptide: MKTDLLASRHIGINEEDTAVMLRKIGVDSLDELINKTIPANIRLKEPLALAKPLTEYEFGKHIADLASKNKLYTTYIGLGWYNTITPAVIQRNVFENPVWYTSYTPYQTEVSQGRLEALMNFQTAVCDLTAMPLANCSLLDEATAAAEAVTMMYALRSRTQQKAGANVVFVDENIFPQTLAVMTTRAIPQGIELRVGKYKEFEPSPEIFACILQYPNSSGNVEDYADFTKKAHEADCKVAVAADILSLALLTPPGEWGADIVFGTTQRLGTPMFYGGPSAGYFATRDEYKRNMPGRIIGWSKDKYGKLCYRMALQTREQHIKREKATSNICTAQALLATMAGFYAVYHGQEGIKTIASRIHSITVFLDKQLKKFGYTQVNAQYFDTLRFELPEHVSAQQIRTIALSKEVNLRYYENGDVGFSIDETTDIAATNVLLSIFAIAAGKDYQKVEDVPEKSNIDKALKRTTPFLTHEVFSNYHTETEMMRYIKRLDRKDISLAQSMISLGSCTMKLNAAAEMLPLSRPEFMSMHPLVPEDQAEGYRELISNLSEDLKVITGFAGVSLQPNSGAAGEYAGLRVIRAYLESIGQGHRNKILIPASAHGTNPASAIQAGFETVTCACDEQGNVDMGDLRAKAEENKEALAALMITYPSTHGIFETEIKEICEIIHACGAQVYMDGANMNAQVGLTNPGFIGADVCHLNLHKTFASPHGGGGPGVGPICVAEHLVPFLPGHSIFGSTQNQVSAAPFGSAGILPITYGYIRMMGTEGLTQATKIAILNANYLAACLKDTYGIVYRGATGFVGHEMILECRKVHEETGISENDIAKRLMDYGYHAPTLSFPVHGTLMIEPTESESLAELDNFVDVMLNIWKEIQEVKNEEADKNDNVLINAPHPEYEIVNDNWEHSYTREKAAYPIESVRENKFWVNVARVDNTLGDRKLLPTRYGTFE.

An N6-(pyridoxal phosphate)lysine modification is found at Lys704.

It belongs to the GcvP family. The glycine cleavage system is composed of four proteins: P, T, L and H. It depends on pyridoxal 5'-phosphate as a cofactor.

It carries out the reaction N(6)-[(R)-lipoyl]-L-lysyl-[glycine-cleavage complex H protein] + glycine + H(+) = N(6)-[(R)-S(8)-aminomethyldihydrolipoyl]-L-lysyl-[glycine-cleavage complex H protein] + CO2. Its function is as follows. The glycine cleavage system catalyzes the degradation of glycine. The P protein binds the alpha-amino group of glycine through its pyridoxal phosphate cofactor; CO(2) is released and the remaining methylamine moiety is then transferred to the lipoamide cofactor of the H protein. The sequence is that of Glycine dehydrogenase (decarboxylating) from Bacteroides thetaiotaomicron (strain ATCC 29148 / DSM 2079 / JCM 5827 / CCUG 10774 / NCTC 10582 / VPI-5482 / E50).